The primary structure comprises 220 residues: Apoptosis regulator BALF1 (220 aa).

Belongs to the Epstein-Barr virus BALF1 family. In terms of assembly, interacts with BHRF1; this interaction modulates BHRF1 activity. Interacts with host BAX and BAK1.

The protein localises to the host cytoplasm. Modulates the antiapoptotic activity of the viral protein BHRF1. May also play an active part in oncogenesis in Burkitt's lymphomy and nasopharyngeal carcinoma. The polypeptide is Apoptosis regulator BALF1 (Homo sapiens (Human)).